Consider the following 398-residue polypeptide: Na(+)/H(+) antiporter NhaA (398 aa).

12 consecutive transmembrane segments (helical) span residues 9–29, 57–77, 95–115, 124–144, 154–174, 177–197, 204–224, 226–246, 255–275, 288–308, 329–349, and 359–379; these read MITHPAAGGVLLFAAALAAIV, LSLLVLVNDGLMAVFFLAVGL, AFPAIAALGGMVAPAVIYSLM, AGWAIPAATDIAFAVGVLALL, VFMLALAIIDDLGAIVIIALF, TALEPLALAAAGAVIGIMALM, FLSLYLLLGAVLWGCILLSGI, ATLAGVVVGGLIPLTLPSTEV, WLQPWVVYLILPLFAFANAGI, FLPLGIAAGLVVGKPLGIVLF, IAAAAMLCGIGFTMSIFIANL, and IVLAKVGILSGSVIAALLGYL.

The protein belongs to the NhaA Na(+)/H(+) (TC 2.A.33) antiporter family.

The protein resides in the cell inner membrane. The catalysed reaction is Na(+)(in) + 2 H(+)(out) = Na(+)(out) + 2 H(+)(in). Na(+)/H(+) antiporter that extrudes sodium in exchange for external protons. In Sodalis glossinidius (strain morsitans), this protein is Na(+)/H(+) antiporter NhaA.